The sequence spans 291 residues: N-acetylmannosamine kinase (291 aa).

ATP contacts are provided by residues 5–12 (AIDIGGTK) and 132–139 (GVGGGVVC). His156, Cys166, Cys168, and Cys173 together coordinate Zn(2+).

It belongs to the ROK (NagC/XylR) family. NanK subfamily. In terms of assembly, homodimer.

It carries out the reaction an N-acyl-D-mannosamine + ATP = an N-acyl-D-mannosamine 6-phosphate + ADP + H(+). The protein operates within amino-sugar metabolism; N-acetylneuraminate degradation; D-fructose 6-phosphate from N-acetylneuraminate: step 2/5. Its function is as follows. Catalyzes the phosphorylation of N-acetylmannosamine (ManNAc) to ManNAc-6-P. This is N-acetylmannosamine kinase from Salmonella typhi.